The following is a 440-amino-acid chain: WAS/WASL-interacting protein family member 2 (440 aa).

Positions 1–18 (MPIPPPPPPPPGPPPPPT) are enriched in pro residues. Positions 1–38 (MPIPPPPPPPPGPPPPPTFNQANTEQPKLSRDEQRNRG) are disordered. The region spanning 36 to 53 (NRGALLQDICKGTKLKKV) is the WH2 domain. At R37 the chain carries Asymmetric dimethylarginine. A binds actin region spans residues 49 to 52 (KLKK). 2 disordered regions span residues 56–386 (VNDR…RDSI) and 419–440 (RVYP…PILR). Residues 116–132 (PSSRAAAPRPPGSAASG) are compositionally biased toward low complexity. Pro residues-rich tracts occupy residues 176–193 (APPP…PTPL), 225–236 (PAPPPVKPPPSP), 249–262 (APPP…PGVP), and 356–378 (RGKP…PPPL).

This sequence belongs to the verprolin family. Interacts with WASL and WASP, and this interaction results in cytoplasmic relocation of these two proteins along actin filaments. Interacts with NCK2 resulting in the localization to sites of focal adhesions.

Its subcellular location is the cytoplasm. It localises to the cytoskeleton. Its function is as follows. Plays an active role in the formation of cell surface protrusions downstream of activated PDGFB receptors. Plays an important role in actin-microspike formation through cooperation with WASL. May cooperate with WASP and WASL to induce mobilization and reorganization of the actin filament system. The sequence is that of WAS/WASL-interacting protein family member 2 (Wipf2) from Mus musculus (Mouse).